We begin with the raw amino-acid sequence, 443 residues long: Ribulose bisphosphate carboxylase large chain (443 aa).

K7 is subject to N6,N6,N6-trimethyllysine. Substrate is bound by residues N116 and T166. K168 acts as the Proton acceptor in catalysis. K170 contacts substrate. K194, D196, and E197 together coordinate Mg(2+). Position 194 is an N6-carboxylysine (K194). The active-site Proton acceptor is H287. Residues R288, H320, and S372 each contribute to the substrate site.

This sequence belongs to the RuBisCO large chain family. Type I subfamily. Heterohexadecamer of 8 large chains and 8 small chains; disulfide-linked. The disulfide link is formed within the large subunit homodimers. The cofactor is Mg(2+). In terms of processing, the disulfide bond which can form in the large chain dimeric partners within the hexadecamer appears to be associated with oxidative stress and protein turnover.

It is found in the plastid. It localises to the chloroplast. It carries out the reaction 2 (2R)-3-phosphoglycerate + 2 H(+) = D-ribulose 1,5-bisphosphate + CO2 + H2O. The catalysed reaction is D-ribulose 1,5-bisphosphate + O2 = 2-phosphoglycolate + (2R)-3-phosphoglycerate + 2 H(+). In terms of biological role, ruBisCO catalyzes two reactions: the carboxylation of D-ribulose 1,5-bisphosphate, the primary event in carbon dioxide fixation, as well as the oxidative fragmentation of the pentose substrate in the photorespiration process. Both reactions occur simultaneously and in competition at the same active site. The sequence is that of Ribulose bisphosphate carboxylase large chain from Abies homolepis (Nikko fir).